The following is an 869-amino-acid chain: Synaptonemal complex protein ZEP1 (869 aa).

Coiled-coil stretches lie at residues 64–298 (TDLE…SGFT), 330–614 (HEEK…SERY), and 641–713 (RAYH…WKVM). The interval 841–869 (GSHPHPANIGELFSEGSLNPYAEDPYAFG) is disordered.

Interacts with CRC1. As to expression, highly expressed in panicles.

It is found in the nucleus. The protein resides in the chromosome. In terms of biological role, required for chromosome synapsis and regulates crossover frequency during meiosis. Acts as a transverse filament protein and constitutes the central element of the synaptonemal complex. The protein is Synaptonemal complex protein ZEP1 (ZEP1) of Oryza sativa subsp. japonica (Rice).